A 689-amino-acid chain; its full sequence is Pentatricopeptide repeat-containing protein At2g03380, mitochondrial (689 aa).

The N-terminal 12 residues, 1–12 (MLRSITLSPTRR), are a transit peptide targeting the mitochondrion. 16 PPR repeats span residues 75–105 (DISIATKLVSLYGFFGYTKDARLVFDQIPEP), 106–140 (DFYLWKVMLRCYCLNKESVEVVKLYDLLMKHGFRY), 141–171 (DDIVFSKALKACTELQDLDNGKKIHCQLVKV), 175–205 (DNVVLTGLLDMYAKCGEIKSAHKVFNDITLR), 206–240 (NVVCWTSMIAGYVKNDLCEEGLVLFNRMRENNVLG), 241–275 (NEYTYGTLIMACTKLSALHQGKWFHGCLVKSGIEL), 276–306 (SSCLVTSLLDMYVKCGDISNARRVFNEHSHV), 307–341 (DLVMWTAMIVGYTHNGSVNEALSLFQKMKGVEIKP), 342–372 (NCVTIASVLSGCGLIENLELGRSVHGLSIKV), 376–406 (DTNVANALVHMYAKCYQNRDAKYVFEMESEK), 407–441 (DIVAWNSIISGFSQNGSIHEALFLFHRMNSESVTP), 442–476 (NGVTVASLFSACASLGSLAVGSSLHAYSVKLGFLA), 479–509 (SVHVGTALLDFYAKCGDPQSARLIFDTIEEK), 510–544 (NTITWSAMIGGYGKQGDTIGSLELFEEMLKKQQKP), 545–580 (NESTFTSILSACGHTGMVNEGKKYFSSMYKDYNFTP), and 581–611 (STKHYTCMVDMLARAGELEQALDIIEKMPIQ). The interval 616–689 (CFGAFLHGCG…SKIAGHSTME (74 aa)) is type E motif; degenerate.

The protein belongs to the PPR family. PCMP-E subfamily.

The protein localises to the mitochondrion. In Arabidopsis thaliana (Mouse-ear cress), this protein is Pentatricopeptide repeat-containing protein At2g03380, mitochondrial (PCMP-E47).